The chain runs to 378 residues: Cyclic GMP-AMP synthase-like receptor 1 (378 aa).

Positions 71, 73, and 187 each coordinate Mg(2+). An ATP-binding site is contributed by 71-73 (EFD). GTP-binding positions include Asp187 and 233–240 (TSSFYEAE). Residues 237–240 (YEAE), Lys258, and 271–275 (SYHIK) contribute to the ATP site.

This sequence belongs to the mab-21 family. It depends on Mg(2+) as a cofactor. The cofactor is Mn(2+).

The enzyme catalyses GTP + ATP = 3',2'-cGAMP + 2 diphosphate. It catalyses the reaction GTP + ATP = pppA(2'-5')pG + diphosphate. The catalysed reaction is pppA(2'-5')pG = 3',2'-cGAMP + diphosphate. Its activity is regulated as follows. The enzyme activity is specifically activated by double-stranded RNA (dsRNA). Recognizes long dsRNA (&gt;30 bp) with no preference for 5' RNA phosphorylation. Functionally, nucleotidyltransferase that catalyzes the formation of cyclic GMP-AMP (3',2'-cGAMP) from ATP and GTP and plays a key role in antiviral innate immunity. Synthesizes 3',2'-cGAMP in a two-step reaction through production of the linear intermediate pppA(2'-5')pG. Acts as a key sensor of double-stranded RNA (dsRNA), the presence of dsRNA in the cytoplasm being a danger signal that triggers the immune responses. Directly binds dsRNA, activating the nucleotidyltransferase activity, leading to synthesis of 3',2'-cGAMP, a second messenger that binds to and activates Sting, thereby triggering the antiviral immune response via activation of the NF-kappa-B transcription factor Rel (Relish). 3',2'-cGAMP is protected from poxin cleavage. This is Cyclic GMP-AMP synthase-like receptor 1 from Drosophila melanogaster (Fruit fly).